The chain runs to 127 residues: Fumarate reductase subunit C (127 aa).

3 helical membrane-spanning segments follow: residues 30 to 50, 67 to 87, and 107 to 127; these read ATVLPLILFTLFLTVGLGSLV, VVIAINIVALLGSLLHAHTFF, and IIVLAQWAAVAFISLIVLIVV.

Belongs to the FrdC family. In terms of assembly, part of an enzyme complex containing four subunits: a flavoprotein (FrdA), an iron-sulfur protein (FrdB), and two hydrophobic anchor proteins (FrdC and FrdD).

It is found in the cell inner membrane. In terms of biological role, anchors the catalytic components of the fumarate reductase complex to the cell membrane, binds quinones. The sequence is that of Fumarate reductase subunit C from Vibrio vulnificus (strain CMCP6).